The sequence spans 296 residues: MTTLENPEMQAQLLSAALPYMQRYENKHVVVKYGGHAMGNPELGKAFARDVALLKQSGVNPIVVHGGGPQIQAMLTKLGIESRFEGGLRVTDEKTVEVVEMVLAGSINKEIVALINAEGEWAIGLCGKDGNMVFAQKAHKTVIDPDSNIEKVLDLGFVGEPAEVDRTLLDLLARSEMIPVIAPVAPGRDGHTYNINADTFAGAIAGALAATRLLFLTNVPGVLDKDKKLIKELSVADAQALIRDGTISGGMIPKVETCIDAIRRGVEGVVILNGKTPHSVLLELFTEHGAGTLIVP.

Substrate contacts are provided by residues 67–68 (GG), Arg89, and Asn194.

Belongs to the acetylglutamate kinase family. ArgB subfamily.

The protein resides in the cytoplasm. It catalyses the reaction N-acetyl-L-glutamate + ATP = N-acetyl-L-glutamyl 5-phosphate + ADP. Its pathway is amino-acid biosynthesis; L-arginine biosynthesis; N(2)-acetyl-L-ornithine from L-glutamate: step 2/4. Functionally, catalyzes the ATP-dependent phosphorylation of N-acetyl-L-glutamate. The sequence is that of Acetylglutamate kinase from Brucella abortus (strain S19).